A 538-amino-acid chain; its full sequence is MHITNLGLHQVSFQSGDSYKGAEETGKHKGVSVISYQRVKNGERNKGIEALNRLYLQNQTSLTGKSLLFARDRAEVFYEAIKLAGGDTSKIKAMMERLDTYKLGEVNKRHINELNKVISEEIRAQLGIKNKKELQTKIKQIFTDYLNNKNWGPVNKNISHHGKNYGFQLTPASHMKIGNKNIFVKEYNGKGICCASTRESDHIANMWLSKVVDDEGKEIFSGIRHGVISAYGLKKNSSERAVAARNKAEELVSAALYSRPELLSQALSGKTVDLKIVSTSLLTPTSLTGGEESMLKDQVNALKGLNSKRGEPTKLLIRNSDGLLKEVSVNLKVVTFNFGVNELALKMGLGWRNVDKLNDESICSLLGDNFLKNGVIGGWAAEAIEKNPPCKNDVIYLANQIKEIINKKLQKNDNGEPYKLSQRMTLLAYTIGAVPCWNCKSGKDRTGMQDAEIKREIIRKHETGQFSQLNSKLSSEEKRLFSTILMNSGNMEIQEMNTGVPGNKVMKKLPLSSLELSYSERIGDSKIWNMVKGYSSFV.

Cys-439 is a catalytic residue. The short motif at Cys-439–Arg-445 is the CX5R motif element.

This sequence belongs to the phosphatase IpgD/SopB family.

It localises to the secreted. The enzyme catalyses a 1,2-diacyl-sn-glycero-3-phospho-(1D-myo-inositol-4,5-bisphosphate) + H2O = a 1,2-diacyl-sn-glycero-3-phospho-(1D-myo-inositol-5-phosphate) + phosphate. Its function is as follows. Converts phosphatidylinositol 4,5-bisphosphate (PtdIns 4,5-P2) to PtdIns 5-P. IpgD is injected by Shigella into the host cell and is required for invasion. The accumulation of PtdIns 5-P causes membrane ruffling and actin cytoskeleton rearrangements at the entry site. The sequence is that of Inositol phosphate phosphatase IpgD (ipgD) from Shigella sonnei.